A 93-amino-acid chain; its full sequence is Acylphosphatase (93 aa).

The 89-residue stretch at 5-93 (AKQIVVRGRV…PNFRGFQVTG (89 aa)) folds into the Acylphosphatase-like domain. Active-site residues include Arg-20 and Asn-38.

This sequence belongs to the acylphosphatase family.

It catalyses the reaction an acyl phosphate + H2O = a carboxylate + phosphate + H(+). In Lacticaseibacillus paracasei (strain ATCC 334 / BCRC 17002 / CCUG 31169 / CIP 107868 / KCTC 3260 / NRRL B-441) (Lactobacillus paracasei), this protein is Acylphosphatase (acyP).